The following is a 1416-amino-acid chain: K homology domain-containing protein 4 (1416 aa).

Disordered stretches follow at residues 25 to 76, 108 to 174, 196 to 225, 255 to 320, and 341 to 385; these read NPNG…TSMR, KAEA…TRSS, VNSS…LSQS, QNDE…FPGR, and SSLN…MPKP. 3 stretches are compositionally biased toward low complexity: residues 196–213, 273–285, and 341–350; these read VNSS…SANH, QSSF…LDQL, and SSLNPPASGS. Residues 357 to 369 are compositionally biased toward polar residues; the sequence is GLSSAQPLRSPQP. 5 KH domains span residues 412 to 504, 508 to 594, 747 to 816, 817 to 892, and 900 to 968; these read FKST…VILD, GLRS…QVSM, FEVR…EELP, AEMS…SVME, and DYIS…DHVP. Disordered regions lie at residues 1215 to 1240 and 1289 to 1416; these read AGVS…SGHR and HASG…FDRA. Over residues 1219–1239 the composition is skewed to polar residues; that stretch reads VPTSGGIQFPSQPSLHQQSGH. Over residues 1343–1374 the composition is skewed to low complexity; it reads QQQAQQQLQYQQQQQQQQQQQQQPGYGMPHQP. Residues 1391–1402 show a composition bias toward polar residues; the sequence is RNTQNPDSTTMD.

RNA-binding protein that recognizes the sequence AUACCC via its tandem KH domains 3 and 4, probably in order to promote mRNA instability. Plays an essential role in filamentous growth and virulence. The chain is K homology domain-containing protein 4 from Mycosarcoma maydis (Corn smut fungus).